Reading from the N-terminus, the 626-residue chain is Janus kinase and microtubule-interacting protein 1 (626 aa).

The tract at residues 1–25 is disordered; the sequence is MSKKGRSKGDKPEAETDSVQMANEE. Residues 1 to 365 are mediates association with microtubules; sequence MSKKGRSKGD…KLKSLTRENV (365 aa). Coiled-coil stretches lie at residues 13–255 and 284–413; these read EAET…EAER and ERDV…DDLS. Residues 365–626 form a mediates interaction with TYK2 and GABBR1 region; that stretch reads VEMKEKLSAQ…ILFEPKLKFM (262 aa). S382 carries the post-translational modification Phosphoserine. Residues 452-461 are compositionally biased toward polar residues; the sequence is ETLSETSYNT. The segment at 452–481 is disordered; that stretch reads ETLSETSYNTDRTDRTPATPEEDLDETTTR. The residue at position 470 (T470) is a Phosphothreonine. Residues 490–604 are a coiled coil; it reads QLTREYQALQ…EFRVLELEVR (115 aa).

This sequence belongs to the JAKMIP family. Homodimer. Interacts with JAK1 and TYK2. Forms a complex with GABBR1 and KIF5B/kinesin-1. Phosphorylated.

The protein resides in the cytoplasm. The protein localises to the cytoskeleton. Its subcellular location is the membrane. In terms of biological role, associates with microtubules and may play a role in the microtubule-dependent transport of the GABA-B receptor. May play a role in JAK1 signaling and regulate microtubule cytoskeleton rearrangements. In Mus musculus (Mouse), this protein is Janus kinase and microtubule-interacting protein 1 (Jakmip1).